The primary structure comprises 369 residues: Probable trehalose-phosphate phosphatase I (369 aa).

Belongs to the trehalose phosphatase family. A divalent metal cation serves as cofactor.

It catalyses the reaction alpha,alpha-trehalose 6-phosphate + H2O = alpha,alpha-trehalose + phosphate. It participates in glycan biosynthesis; trehalose biosynthesis. Its function is as follows. Removes the phosphate from trehalose 6-phosphate to produce free trehalose. Trehalose accumulation in plant may improve abiotic stress tolerance. This Arabidopsis thaliana (Mouse-ear cress) protein is Probable trehalose-phosphate phosphatase I (TPPI).